Reading from the N-terminus, the 517-residue chain is Cytochrome P450 78A5 (517 aa).

A helical transmembrane segment spans residues 20–40; the sequence is AFASVSLIIATVAFLLSPGGL. Cys-459 is a binding site for heme.

The protein belongs to the cytochrome P450 family. Heme serves as cofactor. In terms of tissue distribution, expressed in the periphery of the shoot apical meristem and inflorescence meristem, on the adaxial sides of developing floral organs and in developing ovules in the region where the integuments emerge.

Its subcellular location is the membrane. In terms of biological role, plays a role in regulating directional growth at the meristem/organ boundary. Is required for the promotion of leaf and floral organ growth and for the prolongation of the plastochron. Promotes organ growth in a non-cell-autonomous manner and may generate a mobile growth signal distinct from the classical phytohormones that prevents premature arrest of proliferation, until the correct primordium size has been reached. Functions probably in association with CYP78A7 in regulating relative growth of the shoot apical meristem and plant organs. Is required locally in developing ovules to stimulates cell proliferation and promote seed growth. This chain is Cytochrome P450 78A5 (CYP78A5), found in Arabidopsis thaliana (Mouse-ear cress).